A 512-amino-acid polypeptide reads, in one-letter code: Probable multidrug resistance protein EmrY (512 aa).

At Met1–Pro8 the chain is on the cytoplasmic side. The helical transmembrane segment at Ala9 to Met29 threads the bilayer. Gln30 is a topological domain (periplasmic). A helical membrane pass occupies residues Met31–Ser51. Over Thr52 to Asp53 the chain is Cytoplasmic. Residues Glu54 to Gly74 form a helical membrane-spanning segment. Topologically, residues Arg75–Arg84 are periplasmic. The next 2 helical transmembrane spans lie at Leu85–Asn105 and Leu106–Leu126. Residues Ser127–Thr141 lie on the Periplasmic side of the membrane. Residues Phe142–Gly162 traverse the membrane as a helical segment. The Cytoplasmic portion of the chain corresponds to Gly163–Gly172. The helical transmembrane segment at Trp173–Leu193 threads the bilayer. At Lys194 to Lys204 the chain is on the periplasmic side. Residues Met205–Asp225 traverse the membrane as a helical segment. The Cytoplasmic segment spans residues Lys226–Asn234. A helical membrane pass occupies residues Ser235 to Trp255. At Glu256–Asn273 the chain is on the periplasmic side. The helical transmembrane segment at Phe274–Leu294 threads the bilayer. Topologically, residues Met295 to Ala307 are cytoplasmic. The chain crosses the membrane as a helical span at residues Ile308–Ile328. Over Gly329–Arg338 the chain is Periplasmic. The chain crosses the membrane as a helical span at residues Leu339–Phe359. Residues Met360–Asp364 lie on the Cytoplasmic side of the membrane. The chain crosses the membrane as a helical span at residues Phe365–Pro385. Over Leu386–Arg486 the chain is Periplasmic. Residues Met487–Thr507 form a helical membrane-spanning segment. At Ala508 to Gly512 the chain is on the cytoplasmic side.

The protein belongs to the major facilitator superfamily. EmrB family. In terms of assembly, part of the tripartite efflux system EmrYK-TolC, which is composed of an inner membrane transporter, EmrY, a membrane fusion protein, EmrK, and an outer membrane component, TolC. The complex forms a large protein conduit and can translocate molecules across both the inner and outer membranes.

The protein localises to the cell inner membrane. Its function is as follows. Part of the tripartite efflux system EmrYK-TolC, which confers resistance to various drugs. The polypeptide is Probable multidrug resistance protein EmrY (emrY) (Escherichia coli (strain K12)).